The sequence spans 436 residues: Adenine nucleotide transporter BT1, chloroplastic/amyloplastic/mitochondrial (436 aa).

The segment at 83 to 135 (ASLAPPFPGSRPPGRRGRGSEEEEAEGRRHEEAAAAGRSEPEEGQGQDRQPAP) is disordered. Solcar repeat units follow at residues 132 to 216 (QPAP…AKKF), 227 to 311 (IPIP…LKRL), and 324 to 412 (VGPV…CKKI). 6 helical membrane passes run 137–158 (RLVSGAIAGAVSRTFVAPLETI), 193–213 (AVNVLRVAPSKAIEHFTYDTA), 229–247 (IPTPLVAGALAGFASTLCT), 290–310 (SLIGVVPYAACNFYAYETLKR), 327–347 (VATLLIGSAAGAIASSATFPL), and 384–405 (LYRGLGPSCIKLMPAAGIAFMC). Positions 417-428 (EDEEEEDEAGGG) are enriched in acidic residues. A disordered region spans residues 417 to 436 (EDEEEEDEAGGGEDDKKKVE).

The protein belongs to the mitochondrial carrier (TC 2.A.29) family. As to expression, highly expressed in silks and endosperm of developing kernels. Expressed at intermediate levels in tassels and lower levels in stems and leaves.

It is found in the plastid. It localises to the chloroplast inner membrane. The protein localises to the amyloplast inner membrane. Its subcellular location is the mitochondrion inner membrane. With respect to regulation, inhibited by mersalyl. Its function is as follows. Probable adenylate translocator that mediates transport of ADP-glucose into endosperm storage plastids during starch synthesis. Transports cytosolic ADP-glucose to amyloplast stroma by counter-exchange with ADP. This is Adenine nucleotide transporter BT1, chloroplastic/amyloplastic/mitochondrial (BT1) from Zea mays (Maize).